Consider the following 344-residue polypeptide: Phosphoribosylformylglycinamidine cyclo-ligase (344 aa).

Belongs to the AIR synthase family.

It is found in the cytoplasm. It carries out the reaction 2-formamido-N(1)-(5-O-phospho-beta-D-ribosyl)acetamidine + ATP = 5-amino-1-(5-phospho-beta-D-ribosyl)imidazole + ADP + phosphate + H(+). It functions in the pathway purine metabolism; IMP biosynthesis via de novo pathway; 5-amino-1-(5-phospho-D-ribosyl)imidazole from N(2)-formyl-N(1)-(5-phospho-D-ribosyl)glycinamide: step 2/2. The polypeptide is Phosphoribosylformylglycinamidine cyclo-ligase (Haemophilus influenzae (strain 86-028NP)).